The primary structure comprises 932 residues: Protein translocase subunit SecA (932 aa).

ATP-binding positions include Gln-87, Gly-105–Thr-109, and Asp-515. Zn(2+) contacts are provided by Cys-916, Cys-918, Cys-927, and His-928.

This sequence belongs to the SecA family. In terms of assembly, monomer and homodimer. Part of the essential Sec protein translocation apparatus which comprises SecA, SecYEG and auxiliary proteins SecDF-YajC and YidC. Zn(2+) is required as a cofactor.

It is found in the cell inner membrane. It localises to the cytoplasm. It carries out the reaction ATP + H2O + cellular proteinSide 1 = ADP + phosphate + cellular proteinSide 2.. Part of the Sec protein translocase complex. Interacts with the SecYEG preprotein conducting channel. Has a central role in coupling the hydrolysis of ATP to the transfer of proteins into and across the cell membrane, serving both as a receptor for the preprotein-SecB complex and as an ATP-driven molecular motor driving the stepwise translocation of polypeptide chains across the membrane. The protein is Protein translocase subunit SecA of Burkholderia multivorans (strain ATCC 17616 / 249).